The primary structure comprises 261 residues: U11/U12 small nuclear ribonucleoprotein 31 kDa protein (261 aa).

The tract at residues 18–51 (YYRYSSVAAPPPSNPKHQPSSSAKSSAPGGGSGG) is disordered. Residues 57–135 (STLYVSNLDF…RKLTVSIAAD (79 aa)) form the RRM domain. Residues 153 to 169 (RCYECGDEGHLSYECPK) form a CCHC-type zinc finger. The segment at 165–261 (YECPKNQLGP…YFSDESDDED (97 aa)) is disordered. Basic and acidic residues predominate over residues 226–235 (AGERLRKREA).

In terms of assembly, component of the U11/U12 snRNPs that are part of the U12-type spliceosome. Ubiquitous. Abundantly expressed in the shoot apical neristem.

It localises to the nucleus. RNA chaperone required for proper U12 intron splicing and for normal growth and development of plants. Mainly responsible for meristem activity. Plays a role in regulating cell division. The sequence is that of U11/U12 small nuclear ribonucleoprotein 31 kDa protein (SNRNP31) from Arabidopsis thaliana (Mouse-ear cress).